Reading from the N-terminus, the 374-residue chain is Small ribosomal subunit protein uS4m (374 aa).

Residues 259-323 form the S4 RNA-binding domain; the sequence is GRLENFLMRL…KKLYFFIKSK (65 aa).

The protein belongs to the universal ribosomal protein uS4 family.

The protein localises to the mitochondrion. The polypeptide is Small ribosomal subunit protein uS4m (RPS4) (Acanthamoeba castellanii (Amoeba)).